Here is a 635-residue protein sequence, read N- to C-terminus: Threonine--tRNA ligase (635 aa).

The 61-residue stretch at 1–61 folds into the TGS domain; that stretch reads MINISFPDGS…EHDCKLRILT (61 aa). The catalytic stretch occupies residues 242 to 533; the sequence is DHRKIGKELD…LIEEYAGKFP (292 aa). Residues Cys333, His384, and His510 each contribute to the Zn(2+) site.

This sequence belongs to the class-II aminoacyl-tRNA synthetase family. In terms of assembly, homodimer. Requires Zn(2+) as cofactor.

It is found in the cytoplasm. The catalysed reaction is tRNA(Thr) + L-threonine + ATP = L-threonyl-tRNA(Thr) + AMP + diphosphate + H(+). Its function is as follows. Catalyzes the attachment of threonine to tRNA(Thr) in a two-step reaction: L-threonine is first activated by ATP to form Thr-AMP and then transferred to the acceptor end of tRNA(Thr). Also edits incorrectly charged L-seryl-tRNA(Thr). The sequence is that of Threonine--tRNA ligase from Rickettsia typhi (strain ATCC VR-144 / Wilmington).